The primary structure comprises 1112 residues: Carbamoyl phosphate synthase large chain (1112 aa).

Residues Met1–Glu407 are carboxyphosphate synthetic domain. ATP-binding residues include Arg134, Arg174, Gly180, Gly181, Glu213, Ile215, Glu220, Gly246, Val247, His248, Gln290, and Glu304. Residues Lys138–Ile333 enclose the ATP-grasp 1 domain. Mg(2+)-binding residues include Gln290, Glu304, and Asn306. Mn(2+) contacts are provided by Gln290, Glu304, and Asn306. Residues Thr408–Val559 are oligomerization domain. Residues Ala560–Tyr965 are carbamoyl phosphate synthetic domain. The ATP-grasp 2 domain maps to Gly693–Leu884. ATP-binding residues include Arg729, Arg768, Leu770, Glu775, Gly800, Ile801, His802, Ser803, Gln843, and Glu855. Residues Gln843, Glu855, and Asn857 each contribute to the Mg(2+) site. Gln843, Glu855, and Asn857 together coordinate Mn(2+). The region spanning Gly966–Asn1112 is the MGS-like domain. The segment at Gly966–Asn1112 is allosteric domain.

It belongs to the CarB family. Composed of two chains; the small (or glutamine) chain promotes the hydrolysis of glutamine to ammonia, which is used by the large (or ammonia) chain to synthesize carbamoyl phosphate. Tetramer of heterodimers (alpha,beta)4. Mg(2+) is required as a cofactor. It depends on Mn(2+) as a cofactor.

The enzyme catalyses hydrogencarbonate + L-glutamine + 2 ATP + H2O = carbamoyl phosphate + L-glutamate + 2 ADP + phosphate + 2 H(+). The catalysed reaction is hydrogencarbonate + NH4(+) + 2 ATP = carbamoyl phosphate + 2 ADP + phosphate + 2 H(+). The protein operates within amino-acid biosynthesis; L-arginine biosynthesis; carbamoyl phosphate from bicarbonate: step 1/1. It functions in the pathway pyrimidine metabolism; UMP biosynthesis via de novo pathway; (S)-dihydroorotate from bicarbonate: step 1/3. Its function is as follows. Large subunit of the glutamine-dependent carbamoyl phosphate synthetase (CPSase). CPSase catalyzes the formation of carbamoyl phosphate from the ammonia moiety of glutamine, carbonate, and phosphate donated by ATP, constituting the first step of 2 biosynthetic pathways, one leading to arginine and/or urea and the other to pyrimidine nucleotides. The large subunit (synthetase) binds the substrates ammonia (free or transferred from glutamine from the small subunit), hydrogencarbonate and ATP and carries out an ATP-coupled ligase reaction, activating hydrogencarbonate by forming carboxy phosphate which reacts with ammonia to form carbamoyl phosphate. This is Carbamoyl phosphate synthase large chain from Mycobacterium sp. (strain JLS).